The primary structure comprises 394 residues: Myb-related protein 2 (394 aa).

The HTH myb-type domain occupies 42–102; the sequence is TDAKPRLKWT…HLQKYRLSKN (61 aa). The segment at residues 73 to 98 is a DNA-binding region (H-T-H motif); that stretch reads PKTIMKVMGIPGLTLYHLKSHLQKYR. The segment at 148–168 is coiled coil; sequence GEALQMQIEVQRRLHEQLEVQ. Positions 161–166 match the LHEQLE motif; it reads LHEQLE. The segment at 338 to 363 is disordered; it reads LHGHKSQHQQGNNEDHKLETRNRKGM. The segment covering 350-363 has biased composition (basic and acidic residues); that stretch reads NEDHKLETRNRKGM.

The protein belongs to the MYB-CC family. In terms of assembly, isoform 1: Homodimer. Isoform 3: Does not form homodimer. As to expression, expressed in phloem and/or cambium.

The protein localises to the nucleus. Transcriptional activator that may activate the transcription of specific genes involved in nitrogen uptake or assimilation. Acts redundantly with MYR1 as a repressor of flowering and organ elongation under decreased light intensity. Represses gibberellic acid (GA)-dependent responses and affects levels of bioactive GA. The polypeptide is Myb-related protein 2 (Arabidopsis thaliana (Mouse-ear cress)).